A 410-amino-acid polypeptide reads, in one-letter code: MINIDMTGEKRPLDLPYPSSFAPISAPRNQTFTYMGKFSIDPQYPGASCYPEGIINIVSAGILQGVTPPASTTASSSVTSASPNPLATGPLGVCTMSQTQPELDHLYSPPPPPPPYSGCTGDLYQDPSAFLSPPTTSTSSLAYQPPPSYPSPKPAMDPGLIPMIPDYPGFFPSPCQRDPHGAAGPDRKPFPCPLDSLRVPPPLTPLSTIRNFTLGGPSAGVTGPGASGGSEGPRLTGSGSAAVTTSPYNPHHLPLRPILRPRKYPNRPSKTPVHERPYPCPAEGCDRRFSRSDELTRHIRIHTGHKPFQCRICMRNFSRSDHLTTHIRTHTGEKPFACDYCGRKFARSDERKRHTKIHLRQKERKSSAPSSSASAQPSASGPGGSQAGGSLCSNSTIGGPLACTSRTRTP.

Low complexity predominate over residues 68-83; sequence PPASTTASSSVTSASP. Disordered stretches follow at residues 68–95, 101–120, and 127–151; these read PPAS…GVCT, PELD…SGCT, and PSAF…SYPS. The HCFC1-binding-motif (HBM) motif lies at 104–107; the sequence is DHLY. The span at 127 to 143 shows a compositional bias: low complexity; it reads PSAFLSPPTTSTSSLAY. K188 is subject to N6-acetyllysine. The interval 217–286 is disordered; it reads PSAGVTGPGA…PYPCPAEGCD (70 aa). Residues 222 to 231 are compositionally biased toward gly residues; the sequence is TGPGASGGSE. Over residues 237–248 the composition is skewed to polar residues; sequence GSGSAAVTTSPY. C2H2-type zinc fingers lie at residues 278-302, 308-330, and 336-358; these read YPCP…IRIH, FQCR…IRTH, and FACD…TKIH. The interval 349–410 is disordered; the sequence is DERKRHTKIH…LACTSRTRTP (62 aa). Residues 353–363 show a composition bias toward basic residues; sequence RHTKIHLRQKE. Positions 367–380 are enriched in low complexity; that stretch reads SAPSSSASAQPSAS.

Belongs to the EGR C2H2-type zinc-finger protein family. Interacts with HCFC1. Interacts with WWP2. Interacts with UBC9. Interacts with CITED1. Interacts (via phosphorylated form) with SFN. Ubiquitinated by WWP2 leading to proteasomal degradation. Post-translationally, acetylated. May be deacetylated by HDAC6, HDAC10 or SIRT1.

It is found in the nucleus. The protein operates within protein modification; protein sumoylation. Sequence-specific DNA-binding transcription factor. Plays a role in hindbrain segmentation by regulating the expression of a subset of homeobox containing genes and in Schwann cell myelination by regulating the expression of genes involved in the formation and maintenance of myelin. Binds to two EGR2-consensus sites EGR2A (5'-CTGTAGGAG-3') and EGR2B (5'-ATGTAGGTG-3') in the HOXB3 enhancer and promotes HOXB3 transcriptional activation. Binds to specific DNA sites located in the promoter region of HOXA4, HOXB2 and ERBB2. Regulates hindbrain segmentation by controlling the expression of Hox genes, such as HOXA4, HOXB3 and HOXB2, and thereby specifying odd and even rhombomeres. Promotes the expression of HOXB3 in the rhombomere r5 in the hindbrain. Regulates myelination in the peripheral nervous system after birth, possibly by regulating the expression of myelin proteins, such as MPZ, and by promoting the differentiation of Schwann cells. Involved in the development of the jaw openener musculature, probably by playing a role in its innervation through trigeminal motor neurons. May play a role in adipogenesis, possibly by regulating the expression of CEBPB. Its function is as follows. E3 SUMO-protein ligase helping SUMO1 conjugation to its coregulators NAB1 and NAB2, whose sumoylation down-regulates EGR2 transcriptional activity. The protein is E3 SUMO-protein ligase EGR2 (EGR2) of Cricetulus griseus (Chinese hamster).